Reading from the N-terminus, the 496-residue chain is Beta-amylase (496 aa).

Residues Asp-54, His-94, and Asp-102 each coordinate substrate. Glu-187 acts as the Proton donor in catalysis. Residues Lys-296, His-301, and Thr-343 each coordinate substrate. The active-site Proton acceptor is Glu-381. Substrate is bound by residues 382–383 and Arg-421; that span reads NA.

Belongs to the glycosyl hydrolase 14 family.

The catalysed reaction is Hydrolysis of (1-&gt;4)-alpha-D-glucosidic linkages in polysaccharides so as to remove successive maltose units from the non-reducing ends of the chains.. The chain is Beta-amylase (BMY1) from Vigna unguiculata (Cowpea).